A 299-amino-acid polypeptide reads, in one-letter code: MKKIKCALIGPGNIGTDLLYKLRRSPVLEPVWMVGVDPASDGLARAREFGLKTTDKGVDGLLPHVVGDEIRIAFDATSAYVHRDNSDKLTALGVKMIDLTPAAIGPYCVPPVNLDAHLDSAQTNVNMVTCGGQATIPMVYAVSRVQPVAYGEIVATVSSRSVGPGTRKNIDEFTRTTSGAIEQVGGARKGKAIIVINPAEPPLIMRDTIHCLTDGPPDVDAITASVHAMVKEVQRYVPGYTLKNGPVFDGNRVSVFMEVEGLGDYLPKYAGNLDIMTAAAAATAERFAEQMLAATAATA.

The Acyl-thioester intermediate role is filled by C130. Residues 161–169 and N272 contribute to the NAD(+) site; that span reads SVGPGTRKN.

This sequence belongs to the acetaldehyde dehydrogenase family.

The catalysed reaction is acetaldehyde + NAD(+) + CoA = acetyl-CoA + NADH + H(+). This Burkholderia cenocepacia (strain ATCC BAA-245 / DSM 16553 / LMG 16656 / NCTC 13227 / J2315 / CF5610) (Burkholderia cepacia (strain J2315)) protein is Acetaldehyde dehydrogenase 1 (mhpF).